The sequence spans 205 residues: Small ribosomal subunit protein uS4 (205 aa).

An S4 RNA-binding domain is found at 93–171 (SRVSSVLYRS…SPHYLEVDRE (79 aa)).

This sequence belongs to the universal ribosomal protein uS4 family. Part of the 30S ribosomal subunit. Contacts protein S5. The interaction surface between S4 and S5 is involved in control of translational fidelity.

In terms of biological role, one of the primary rRNA binding proteins, it binds directly to 16S rRNA where it nucleates assembly of the body of the 30S subunit. Functionally, with S5 and S12 plays an important role in translational accuracy. The chain is Small ribosomal subunit protein uS4 from Neorickettsia sennetsu (strain ATCC VR-367 / Miyayama) (Ehrlichia sennetsu).